The primary structure comprises 358 residues: 3-isopropylmalate dehydrogenase (358 aa).

Arg-92, Arg-102, Arg-130, and Asp-224 together coordinate substrate. Asp-224, Asp-248, and Asp-252 together coordinate Mg(2+). 282-294 provides a ligand contact to NAD(+); sequence GSAPDIAGQGIAN.

The protein belongs to the isocitrate and isopropylmalate dehydrogenases family. LeuB type 1 subfamily. As to quaternary structure, homodimer. The cofactor is Mg(2+). Requires Mn(2+) as cofactor.

The protein resides in the cytoplasm. The catalysed reaction is (2R,3S)-3-isopropylmalate + NAD(+) = 4-methyl-2-oxopentanoate + CO2 + NADH. It functions in the pathway amino-acid biosynthesis; L-leucine biosynthesis; L-leucine from 3-methyl-2-oxobutanoate: step 3/4. Its function is as follows. Catalyzes the oxidation of 3-carboxy-2-hydroxy-4-methylpentanoate (3-isopropylmalate) to 3-carboxy-4-methyl-2-oxopentanoate. The product decarboxylates to 4-methyl-2 oxopentanoate. In Bordetella parapertussis (strain 12822 / ATCC BAA-587 / NCTC 13253), this protein is 3-isopropylmalate dehydrogenase.